Reading from the N-terminus, the 452-residue chain is Phosphoglucosamine mutase (452 aa).

Serine 108 (phosphoserine intermediate) is an active-site residue. Serine 108, aspartate 247, aspartate 249, and aspartate 251 together coordinate Mg(2+). The residue at position 108 (serine 108) is a Phosphoserine.

It belongs to the phosphohexose mutase family. Mg(2+) serves as cofactor. Activated by phosphorylation.

The catalysed reaction is alpha-D-glucosamine 1-phosphate = D-glucosamine 6-phosphate. Catalyzes the conversion of glucosamine-6-phosphate to glucosamine-1-phosphate. In Paraburkholderia xenovorans (strain LB400), this protein is Phosphoglucosamine mutase.